A 372-amino-acid polypeptide reads, in one-letter code: Ribosomal RNA small subunit methyltransferase H (372 aa).

S-adenosyl-L-methionine contacts are provided by residues 44 to 46 (GGH), aspartate 63, leucine 97, aspartate 111, and glutamine 118. The segment covering 315 to 334 (RAAERLDPTAEQRRRTDRER) has biased composition (basic and acidic residues). A disordered region spans residues 315–372 (RAAERLDPTAEQRRRTDRERYRRRVRAMHQPGTGSAVRRPTPGDDGTGTDEEGEGHDS). Residues 361–372 (TGTDEEGEGHDS) show a composition bias toward acidic residues.

The protein belongs to the methyltransferase superfamily. RsmH family.

Its subcellular location is the cytoplasm. The catalysed reaction is cytidine(1402) in 16S rRNA + S-adenosyl-L-methionine = N(4)-methylcytidine(1402) in 16S rRNA + S-adenosyl-L-homocysteine + H(+). In terms of biological role, specifically methylates the N4 position of cytidine in position 1402 (C1402) of 16S rRNA. The polypeptide is Ribosomal RNA small subunit methyltransferase H (Salinispora arenicola (strain CNS-205)).